Here is a 278-residue protein sequence, read N- to C-terminus: ATP synthase subunit a (278 aa).

6 consecutive transmembrane segments (helical) span residues 41 to 61 (FLNI…LLFF), 108 to 128 (LTIF…VDFV), 149 to 168 (INIT…YFGI), 180 to 200 (FFFQ…LELI), 222 to 242 (LIFI…LSVP), and 244 to 264 (AIFH…LTII).

Belongs to the ATPase A chain family. F-type ATPases have 2 components, CF(1) - the catalytic core - and CF(0) - the membrane proton channel. CF(1) has five subunits: alpha(3), beta(3), gamma(1), delta(1), epsilon(1). CF(0) has three main subunits: a(1), b(2) and c(9-12). The alpha and beta chains form an alternating ring which encloses part of the gamma chain. CF(1) is attached to CF(0) by a central stalk formed by the gamma and epsilon chains, while a peripheral stalk is formed by the delta and b chains.

Its subcellular location is the cell membrane. Functionally, key component of the proton channel; it plays a direct role in the translocation of protons across the membrane. This Wigglesworthia glossinidia brevipalpis protein is ATP synthase subunit a.